Consider the following 428-residue polypeptide: Gamma-glutamyl phosphate reductase (428 aa).

The protein belongs to the gamma-glutamyl phosphate reductase family.

It localises to the cytoplasm. It carries out the reaction L-glutamate 5-semialdehyde + phosphate + NADP(+) = L-glutamyl 5-phosphate + NADPH + H(+). It functions in the pathway amino-acid biosynthesis; L-proline biosynthesis; L-glutamate 5-semialdehyde from L-glutamate: step 2/2. Catalyzes the NADPH-dependent reduction of L-glutamate 5-phosphate into L-glutamate 5-semialdehyde and phosphate. The product spontaneously undergoes cyclization to form 1-pyrroline-5-carboxylate. The polypeptide is Gamma-glutamyl phosphate reductase (Chelativorans sp. (strain BNC1)).